A 463-amino-acid chain; its full sequence is Putative ankyrin repeat protein R579 (463 aa).

ANK repeat units follow at residues 124-154, 156-181, 242-271, 273-299, 300-328, 329-355, 356-385, and 387-416; these read LKTD…KCTI, SITR…SENI, KEKN…QFNP, IYLW…DYRP, HIDR…VSQE, NINE…MGAD, INYK…DITT, and GSND…TITL.

This is Putative ankyrin repeat protein R579 from Acanthamoeba polyphaga (Amoeba).